A 94-amino-acid polypeptide reads, in one-letter code: Small ribosomal subunit protein uS19 (94 aa).

Belongs to the universal ribosomal protein uS19 family.

Protein S19 forms a complex with S13 that binds strongly to the 16S ribosomal RNA. This Elusimicrobium minutum (strain Pei191) protein is Small ribosomal subunit protein uS19.